Reading from the N-terminus, the 384-residue chain is GDSL esterase/lipase At1g28670 (384 aa).

The first 24 residues, 1 to 24 (MASSLKKLISSFLLVLYSTTIIVA), serve as a signal peptide directing secretion. Residue S42 is the Nucleophile of the active site. 3 N-linked (GlcNAc...) asparagine glycosylation sites follow: N105, N138, and N321. Active-site residues include D346 and H349.

The protein belongs to the 'GDSL' lipolytic enzyme family.

The protein resides in the secreted. This Arabidopsis thaliana (Mouse-ear cress) protein is GDSL esterase/lipase At1g28670.